The following is a 263-amino-acid chain: Hydroxyethylthiazole kinase (263 aa).

Substrate is bound at residue M39. ATP contacts are provided by K115 and T160. G187 is a substrate binding site.

Belongs to the Thz kinase family. Mg(2+) serves as cofactor.

The catalysed reaction is 5-(2-hydroxyethyl)-4-methylthiazole + ATP = 4-methyl-5-(2-phosphooxyethyl)-thiazole + ADP + H(+). It participates in cofactor biosynthesis; thiamine diphosphate biosynthesis; 4-methyl-5-(2-phosphoethyl)-thiazole from 5-(2-hydroxyethyl)-4-methylthiazole: step 1/1. In terms of biological role, catalyzes the phosphorylation of the hydroxyl group of 4-methyl-5-beta-hydroxyethylthiazole (THZ). This is Hydroxyethylthiazole kinase from Staphylococcus aureus (strain COL).